We begin with the raw amino-acid sequence, 206 residues long: Large ribosomal subunit protein uL4 (206 aa).

Positions K49–A79 are disordered.

It belongs to the universal ribosomal protein uL4 family. Part of the 50S ribosomal subunit.

Its function is as follows. One of the primary rRNA binding proteins, this protein initially binds near the 5'-end of the 23S rRNA. It is important during the early stages of 50S assembly. It makes multiple contacts with different domains of the 23S rRNA in the assembled 50S subunit and ribosome. Forms part of the polypeptide exit tunnel. This is Large ribosomal subunit protein uL4 from Methylobacterium sp. (strain 4-46).